A 200-amino-acid polypeptide reads, in one-letter code: Casparian strip membrane protein 2 (200 aa).

Residues 1–37 (MMKSDSVAIDVPESSSVAKRKAPFMANIRDENGGYKK) lie on the Cytoplasmic side of the membrane. Residues 38 to 58 (GLAIFDFILRLGAIAAALGAA) form a helical membrane-spanning segment. Topologically, residues 59 to 88 (STMGTSDETLPFFTQFFQFNAGYDDFPTFQ) are extracellular. A helical transmembrane segment spans residues 89 to 109 (FFVIAMAMVAGYLVLSLPFSI). The Cytoplasmic portion of the chain corresponds to 110–121 (VSICRPHAAGPR). Residues 122–142 (ILLFILDTVALTLNAAAGAAA) traverse the membrane as a helical segment. Over 143 to 175 (ADIVYLAHNGNQTTNWLAICLQFGDFCREVSGS) the chain is Extracellular. An N-linked (GlcNAc...) asparagine glycan is attached at asparagine 153. Residues 176-196 (VVASFASVVILMVLVVMSGLA) traverse the membrane as a helical segment. The Cytoplasmic portion of the chain corresponds to 197 to 200 (LRRY).

Belongs to the Casparian strip membrane proteins (CASP) family. In terms of assembly, homodimer and heterodimers.

It is found in the cell membrane. In terms of biological role, regulates membrane-cell wall junctions and localized cell wall deposition. Required for establishment of the Casparian strip membrane domain (CSD) and the subsequent formation of Casparian strips, a cell wall modification of the root endodermis that determines an apoplastic barrier between the intraorganismal apoplasm and the extraorganismal apoplasm and prevents lateral diffusion. In Ricinus communis (Castor bean), this protein is Casparian strip membrane protein 2.